Consider the following 459-residue polypeptide: FAD-dependent monooxygenase nanF (459 aa).

Residues Glu49, Gly62, and Arg121 each contribute to the FAD site. Active-site residues include Arg200 and Tyr230. Asp327 and Gly340 together coordinate FAD.

Belongs to the paxM FAD-dependent monooxygenase family. It depends on FAD as a cofactor.

The protein operates within secondary metabolite biosynthesis. Its function is as follows. FAD-dependent monooxygenase; part of the gene cluster that mediates the biosynthesis of the benzazepine alkaloid nanangelenin A which contains an unprecedented 3,4-dihydro-1-benzazepine-2,5-dione-N-prenyl-N-acetoxy-anthranilamide scaffold. The first step of nanangelenin biosynthesis is catalyzed by the indoleamine 2,3-dioxygenase nanC which produces N-formyl-kynurenine through the catabolism of tryptophan. The two-module NRPS nanA then utilizes anthranilate (Ant) and L-kynurenine (L-Kyn) to assemble the dipeptide product nanangelenin B. The first adenylation domain of nanA (A1) loads anthranilate onto the T1 domain, while A2 loads kynurenine, generated through spontaneous nonenzymatic deformylation of the nanC-supplied N-formyl-kynurenine. The peptide bond formation between the tethered amino acids is catalyzed by the first condensation domain (C1) between anthranilate's carbonyl carbon and kynurenine's aliphatic primary amine. The second C domain (C2) catalyzes the final cyclization event between the aromatic amine of kynurenine and the tethered carbonyl carbon, yielding nanangelenin B. The terminal T3 domain enhances the catalytic efficiency of C2, suggesting the T2-tethered Ant-L-Kyn is transferred to T3 prior to cyclization by C2. Once released from nanA, nanangelenin B is then prenylated by the prenyltransferase nanD to form nanangelenin C. Nanangelenin C is then N-hydroxylated by the FAD-dependent monooxygenase nanF and further acetylated by the acetyltransferase nanB to yield nanangelenin F. Finally, the N-methyltransferase nanE methylates the amide nitrogen of 1-benzazepine to convert nanangelenin F into nanangelenin A. NanE is also able to methylate most of the intermediates of the pathway such as nanangelenin B and nanangelenin C to produce nanangelenin D and nanangelenin E, respectively. The polypeptide is FAD-dependent monooxygenase nanF (Aspergillus nanangensis).